Reading from the N-terminus, the 270-residue chain is Glutamate racemase (270 aa).

Substrate contacts are provided by residues 7-8 (DS) and 39-40 (YG). The Proton donor/acceptor role is filled by Cys-70. Residue 71–72 (NT) participates in substrate binding. The Proton donor/acceptor role is filled by Cys-194. Residue 195-196 (TH) coordinates substrate.

The protein belongs to the aspartate/glutamate racemases family.

The catalysed reaction is L-glutamate = D-glutamate. It functions in the pathway cell wall biogenesis; peptidoglycan biosynthesis. In terms of biological role, provides the (R)-glutamate required for cell wall biosynthesis. This chain is Glutamate racemase, found in Jannaschia sp. (strain CCS1).